A 620-amino-acid chain; its full sequence is 1-deoxy-D-xylulose-5-phosphate synthase (620 aa).

Thiamine diphosphate-binding positions include histidine 80 and 121 to 123 (GHS). Residue aspartate 152 coordinates Mg(2+). Thiamine diphosphate is bound by residues 153-154 (GA), asparagine 181, tyrosine 288, and glutamate 370. Asparagine 181 lines the Mg(2+) pocket.

Belongs to the transketolase family. DXPS subfamily. In terms of assembly, homodimer. The cofactor is Mg(2+). It depends on thiamine diphosphate as a cofactor.

It catalyses the reaction D-glyceraldehyde 3-phosphate + pyruvate + H(+) = 1-deoxy-D-xylulose 5-phosphate + CO2. It functions in the pathway metabolic intermediate biosynthesis; 1-deoxy-D-xylulose 5-phosphate biosynthesis; 1-deoxy-D-xylulose 5-phosphate from D-glyceraldehyde 3-phosphate and pyruvate: step 1/1. Catalyzes the acyloin condensation reaction between C atoms 2 and 3 of pyruvate and glyceraldehyde 3-phosphate to yield 1-deoxy-D-xylulose-5-phosphate (DXP). The chain is 1-deoxy-D-xylulose-5-phosphate synthase from Klebsiella pneumoniae subsp. pneumoniae (strain ATCC 700721 / MGH 78578).